A 356-amino-acid chain; its full sequence is Histidinol-phosphate aminotransferase (356 aa).

Lys-214 bears the N6-(pyridoxal phosphate)lysine mark.

This sequence belongs to the class-II pyridoxal-phosphate-dependent aminotransferase family. Histidinol-phosphate aminotransferase subfamily. In terms of assembly, homodimer. Pyridoxal 5'-phosphate serves as cofactor.

It catalyses the reaction L-histidinol phosphate + 2-oxoglutarate = 3-(imidazol-4-yl)-2-oxopropyl phosphate + L-glutamate. The protein operates within amino-acid biosynthesis; L-histidine biosynthesis; L-histidine from 5-phospho-alpha-D-ribose 1-diphosphate: step 7/9. The polypeptide is Histidinol-phosphate aminotransferase (Escherichia coli O17:K52:H18 (strain UMN026 / ExPEC)).